A 149-amino-acid chain; its full sequence is Large ribosomal subunit protein bL9 (149 aa).

Belongs to the bacterial ribosomal protein bL9 family.

Binds to the 23S rRNA. The protein is Large ribosomal subunit protein bL9 of Enterobacter sp. (strain 638).